A 193-amino-acid chain; its full sequence is Large ribosomal subunit protein eL18 (193 aa).

The tract at residues 158–193 (HFGAAGVPGSHAKPHVSSRGKERQRSSKRRHAFRHK) is disordered. The span at 183-193 (SSKRRHAFRHK) shows a compositional bias: basic residues.

It belongs to the eukaryotic ribosomal protein eL18 family.

The protein resides in the cytoplasm. The polypeptide is Large ribosomal subunit protein eL18 (RPL18-A) (Trypanosoma brucei brucei (strain 927/4 GUTat10.1)).